We begin with the raw amino-acid sequence, 276 residues long: Small ribosomal subunit protein uS3 (276 aa).

Residues 38–106 (IRRMMTKGME…QVQLNILEVK (69 aa)) enclose the KH type-2 domain. Over residues 216-228 (NAAARAGNRPARG) the composition is skewed to low complexity. A disordered region spans residues 216–276 (NAAARAGNRP…PAAESTGTEA (61 aa)). The span at 229 to 245 (GADRPAGRGGRGGERGG) shows a compositional bias: basic and acidic residues. A compositionally biased stretch (low complexity) spans 254–269 (PAAEAPKADAAAAPAA).

The protein belongs to the universal ribosomal protein uS3 family. As to quaternary structure, part of the 30S ribosomal subunit. Forms a tight complex with proteins S10 and S14.

Functionally, binds the lower part of the 30S subunit head. Binds mRNA in the 70S ribosome, positioning it for translation. This chain is Small ribosomal subunit protein uS3, found in Streptomyces griseus subsp. griseus (strain JCM 4626 / CBS 651.72 / NBRC 13350 / KCC S-0626 / ISP 5235).